The sequence spans 466 residues: 3-isopropylmalate dehydratase large subunit (466 aa).

3 residues coordinate [4Fe-4S] cluster: C347, C407, and C410.

Belongs to the aconitase/IPM isomerase family. LeuC type 1 subfamily. Heterodimer of LeuC and LeuD. [4Fe-4S] cluster serves as cofactor.

The enzyme catalyses (2R,3S)-3-isopropylmalate = (2S)-2-isopropylmalate. It functions in the pathway amino-acid biosynthesis; L-leucine biosynthesis; L-leucine from 3-methyl-2-oxobutanoate: step 2/4. Functionally, catalyzes the isomerization between 2-isopropylmalate and 3-isopropylmalate, via the formation of 2-isopropylmaleate. In Escherichia coli O45:K1 (strain S88 / ExPEC), this protein is 3-isopropylmalate dehydratase large subunit.